The primary structure comprises 385 residues: Single-stranded DNA-binding protein 4 (385 aa).

M1 carries the N-acetylmethionine modification. A LisH domain is found at 17–49 (AREKLALYVYEYLLHIGAQKSAQTFLSEIRWEK). Disordered stretches follow at residues 122–287 (FQGP…NSSE) and 331–363 (GSGD…GEMA). Over residues 245-263 (SPSGNSIPYSSSSPGSYTG) the composition is skewed to low complexity. Positions 267–277 (GGGPPGTPIMP) are enriched in pro residues. Position 341 is a phosphoserine (S341). A Phosphothreonine modification is found at T355.

It localises to the nucleus. The polypeptide is Single-stranded DNA-binding protein 4 (SSBP4) (Homo sapiens (Human)).